Reading from the N-terminus, the 290-residue chain is N-acetylmannosamine kinase (290 aa).

ATP-binding positions include 6–13 (ALDIGGTK) and 132–139 (GVGGGIIL). Positions 156, 166, 168, and 173 each coordinate Zn(2+).

It belongs to the ROK (NagC/XylR) family. NanK subfamily. Homodimer.

The catalysed reaction is an N-acyl-D-mannosamine + ATP = an N-acyl-D-mannosamine 6-phosphate + ADP + H(+). It functions in the pathway amino-sugar metabolism; N-acetylneuraminate degradation; D-fructose 6-phosphate from N-acetylneuraminate: step 2/5. Catalyzes the phosphorylation of N-acetylmannosamine (ManNAc) to ManNAc-6-P. The protein is N-acetylmannosamine kinase of Yersinia pseudotuberculosis serotype O:3 (strain YPIII).